The sequence spans 597 residues: MAEGSAVSDPQHAARLLRALSSFREEARFCDAHLVLDGEEIPVQKNILAAASPYIRTKLNYNPPKDDGSTYKIELEGISVMVMREILDYIFSGQIRLNEDTIQDVVQAADLLLLTDLKTLCCEFLEGCIAAENCIGIRDFALHYCLHHVHYLATEYLETHFRDVSSTEEFLELSPQKLKEVISLEKLNVGNERYVFEAVIRWIAHDVEMRKVHMKDVMSALWVSGLDSSYLREQMLNEPLVREIVKECSNIPLSQPQQGEAMLASFKPRGYSECIVTIGGEERVSRKPTAAMRCMCPLYDPNRQLWIELAPLSMPRINHGVLSAEGFLFVLGGQDENKQTLSSGEKYDPDANTWTALPPMHEARHNFGIVEIDGMLYILGGEDGDRELISMECYDIYSKTWTKQPDLTMVRKIGCYAAMKKKIYAMGGGSYGKLFESVECYDPRTQQWTAICPLKERRFGAVACGVAMELYVFGGVRSREDIQGSEMVTCKSEFYHDEFKRWIYLNDQNLCIPASSSFVYGAVPIGASIYVIGDLDTGTNYDYVREFKRSTGTWHHTKPLLPSDLRRTGCAALRIANCKLFRLQLQQGLFRIRVHSP.

Residues 30–99 (CDAHLVLDGE…IFSGQIRLNE (70 aa)) form the BTB domain. The region spanning 134–236 (CIGIRDFALH…DSSYLREQML (103 aa)) is the BACK domain. 6 Kelch repeats span residues 274–326 (CIVT…SAEG), 327–374 (FLFV…EIDG), 376–421 (LYIL…AMKK), 422–468 (KIYA…GVAM), 470–522 (LYVF…VYGA), and 528–574 (SIYV…AALR).

Interacts with TBCB. Interacts with CUL3. Part of a complex that contains CUL3, RBX1 and GAN. Interacts (via BTB domain) with UBA1. Interacts (via Kelch domains) with MAP1B (via C-terminus) and MAP1S (via C-terminus). In terms of processing, ubiquitinated by E3 ubiquitin ligase complex formed by CUL3 and RBX1 and probably targeted for proteasome-independent degradation. In terms of tissue distribution, expressed in brain, heart and muscle (at protein level).

It is found in the cytoplasm. It localises to the cytoskeleton. The protein operates within protein modification; protein ubiquitination. In terms of biological role, probable cytoskeletal component that directly or indirectly plays an important role in neurofilament architecture. May act as a substrate-specific adapter of an E3 ubiquitin-protein ligase complex which mediates the ubiquitination and subsequent proteasomal degradation of target proteins. Controls degradation of TBCB. Controls degradation of MAP1B and MAP1S, and is critical for neuronal maintenance and survival. The chain is Gigaxonin from Mus musculus (Mouse).